The following is a 402-amino-acid chain: S-adenosylmethionine synthase (402 aa).

His-16 contacts ATP. Residue Asp-18 coordinates Mg(2+). Glu-44 serves as a coordination point for K(+). Positions 57 and 103 each coordinate L-methionine. Residues 103 to 113 are flexible loop; sequence QSPDIAQGVDT. Residues 178–180, 249–250, Asp-258, 264–265, Ala-281, and Lys-285 contribute to the ATP site; these read DGK, KF, and RK. Asp-258 serves as a coordination point for L-methionine. Lys-289 contacts L-methionine.

The protein belongs to the AdoMet synthase family. As to quaternary structure, homotetramer; dimer of dimers. Mg(2+) is required as a cofactor. Requires K(+) as cofactor.

The protein resides in the cytoplasm. It carries out the reaction L-methionine + ATP + H2O = S-adenosyl-L-methionine + phosphate + diphosphate. It participates in amino-acid biosynthesis; S-adenosyl-L-methionine biosynthesis; S-adenosyl-L-methionine from L-methionine: step 1/1. Functionally, catalyzes the formation of S-adenosylmethionine (AdoMet) from methionine and ATP. The overall synthetic reaction is composed of two sequential steps, AdoMet formation and the subsequent tripolyphosphate hydrolysis which occurs prior to release of AdoMet from the enzyme. The chain is S-adenosylmethionine synthase from Mycobacterium sp. (strain JLS).